Here is a 664-residue protein sequence, read N- to C-terminus: Zinc finger protein 710 (664 aa).

Glycyl lysine isopeptide (Lys-Gly) (interchain with G-Cter in SUMO2) cross-links involve residues Lys-110 and Lys-113. The disordered stretch occupies residues 121–141 (VYEVSVPGDDKDAGPAEAPAE). C2H2-type zinc fingers lie at residues 295-317 (WQCR…ILGH), 323-345 (HSCP…LLTH), and 351-373 (HKCQ…MLLH). Residue Lys-377 forms a Glycyl lysine isopeptide (Lys-Gly) (interchain with G-Cter in SUMO2) linkage. 8 consecutive C2H2-type zinc fingers follow at residues 379–401 (YSCH…EVKH), 407–429 (HVCV…LASH), 435–457 (YQCL…MLKH), 463–485 (FVCT…SLTH), 491–513 (FKCE…MLIH), 519–541 (YQCH…MIVH), 547–569 (FKCK…MHLH), and 575–598 (FKCP…KVKH).

It belongs to the krueppel C2H2-type zinc-finger protein family.

The protein resides in the nucleus. May be involved in transcriptional regulation. The chain is Zinc finger protein 710 (ZNF710) from Homo sapiens (Human).